The sequence spans 100 residues: Small ribosomal subunit protein uS14c (100 aa).

It belongs to the universal ribosomal protein uS14 family. As to quaternary structure, part of the 30S ribosomal subunit.

It is found in the plastid. The protein resides in the chloroplast. Its function is as follows. Binds 16S rRNA, required for the assembly of 30S particles. The polypeptide is Small ribosomal subunit protein uS14c (Gracilaria tenuistipitata var. liui (Red alga)).